Here is a 309-residue protein sequence, read N- to C-terminus: Aspartate carbamoyltransferase catalytic subunit (309 aa).

Residues arginine 55 and threonine 56 each coordinate carbamoyl phosphate. Lysine 85 serves as a coordination point for L-aspartate. Carbamoyl phosphate-binding residues include arginine 106, histidine 135, and glutamine 138. 2 residues coordinate L-aspartate: arginine 168 and arginine 230. 2 residues coordinate carbamoyl phosphate: leucine 268 and proline 269.

The protein belongs to the aspartate/ornithine carbamoyltransferase superfamily. ATCase family. In terms of assembly, heterododecamer (2C3:3R2) of six catalytic PyrB chains organized as two trimers (C3), and six regulatory PyrI chains organized as three dimers (R2).

It carries out the reaction carbamoyl phosphate + L-aspartate = N-carbamoyl-L-aspartate + phosphate + H(+). It functions in the pathway pyrimidine metabolism; UMP biosynthesis via de novo pathway; (S)-dihydroorotate from bicarbonate: step 2/3. Catalyzes the condensation of carbamoyl phosphate and aspartate to form carbamoyl aspartate and inorganic phosphate, the committed step in the de novo pyrimidine nucleotide biosynthesis pathway. The sequence is that of Aspartate carbamoyltransferase catalytic subunit from Vibrio campbellii (strain ATCC BAA-1116).